The sequence spans 1488 residues: Chromosome partition protein MukB (1488 aa).

34 to 41 (GGNGAGKS) contacts ATP. Coiled-coil stretches lie at residues 326 to 418 (LEAD…QYNQ), 444 to 472 (LDTF…QTAH), and 509 to 602 (RHLA…QRAP). The flexible hinge stretch occupies residues 666-783 (PGGAEDQRLN…SLPIFGRAAR (118 aa)). 3 coiled-coil regions span residues 835-923 (EAEI…AKLE), 977-1116 (EMLS…AKAG), and 1209-1265 (VEAI…LQSV). The interval 1049–1074 (ADSGAEERARQRRDELHAQLSNNRSR) is disordered. The span at 1051–1065 (SGAEERARQRRDELH) shows a compositional bias: basic and acidic residues.

This sequence belongs to the SMC family. MukB subfamily. In terms of assembly, homodimerization via its hinge domain. Binds to DNA via its C-terminal region. Interacts, and probably forms a ternary complex, with MukE and MukF via its C-terminal region. The complex formation is stimulated by calcium or magnesium. Interacts with tubulin-related protein FtsZ.

It is found in the cytoplasm. The protein resides in the nucleoid. In terms of biological role, plays a central role in chromosome condensation, segregation and cell cycle progression. Functions as a homodimer, which is essential for chromosome partition. Involved in negative DNA supercoiling in vivo, and by this means organize and compact chromosomes. May achieve or facilitate chromosome segregation by condensation DNA from both sides of a centrally located replisome during cell division. The protein is Chromosome partition protein MukB of Salmonella gallinarum (strain 287/91 / NCTC 13346).